The chain runs to 1190 residues: Pyruvate-flavodoxin oxidoreductase (1190 aa).

4Fe-4S ferredoxin-type domains are found at residues 687–716 (EIPV…SKVY) and 743–773 (FTIQ…PRKK). Residues C696, C699, C702, C706, C752, C755, C758, C762, C826, C829, C854, and C1089 each contribute to the [4Fe-4S] cluster site.

It belongs to the pyruvate:ferredoxin/flavodoxin oxidoreductase family. [4Fe-4S] cluster is required as a cofactor.

The enzyme catalyses oxidized [flavodoxin] + pyruvate + CoA + 2 H(+) = reduced [flavodoxin] + acetyl-CoA + CO2. In terms of biological role, oxidoreductase required for the transfer of electrons from pyruvate to flavodoxin, which reduces nitrogenase. The sequence is that of Pyruvate-flavodoxin oxidoreductase (nifJ) from Trichormus variabilis (strain ATCC 29413 / PCC 7937) (Anabaena variabilis).